We begin with the raw amino-acid sequence, 262 residues long: Type III pantothenate kinase (262 aa).

12–19 (DIGNTSIA) is a binding site for ATP. Residues tyrosine 94 and 109 to 112 (GSDV) each bind substrate. Catalysis depends on aspartate 111, which acts as the Proton acceptor. Position 132 (aspartate 132) interacts with K(+). ATP is bound at residue threonine 135. A substrate-binding site is contributed by threonine 187.

This sequence belongs to the type III pantothenate kinase family. In terms of assembly, homodimer. It depends on NH4(+) as a cofactor. K(+) serves as cofactor.

Its subcellular location is the cytoplasm. The catalysed reaction is (R)-pantothenate + ATP = (R)-4'-phosphopantothenate + ADP + H(+). The protein operates within cofactor biosynthesis; coenzyme A biosynthesis; CoA from (R)-pantothenate: step 1/5. Its function is as follows. Catalyzes the phosphorylation of pantothenate (Pan), the first step in CoA biosynthesis. The chain is Type III pantothenate kinase from Borreliella burgdorferi (strain ATCC 35210 / DSM 4680 / CIP 102532 / B31) (Borrelia burgdorferi).